The sequence spans 902 residues: Viral-enhancing factor (902 aa).

The 304-residue stretch at 27-330 (HRRTEVGVVL…IFAWLYNPQR (304 aa)) folds into the Peptidase M60 domain. N-linked (GlcNAc...) asparagine; by host glycans are attached at residues asparagine 73, asparagine 265, asparagine 278, asparagine 339, asparagine 540, asparagine 593, asparagine 594, asparagine 620, asparagine 782, and asparagine 840.

Functionally, involved in disruption of the peritrophic membrane and fusion of nucleocapsids with midgut cells. The chain is Viral-enhancing factor (VEF) from Heliothis (HaGV).